A 421-amino-acid chain; its full sequence is 4-hydroxy-3-methylbut-2-en-1-yl diphosphate synthase (flavodoxin) (421 aa).

4 residues coordinate [4Fe-4S] cluster: cysteine 311, cysteine 314, cysteine 357, and glutamate 364.

The protein belongs to the IspG family. Requires [4Fe-4S] cluster as cofactor.

It carries out the reaction (2E)-4-hydroxy-3-methylbut-2-enyl diphosphate + oxidized [flavodoxin] + H2O + 2 H(+) = 2-C-methyl-D-erythritol 2,4-cyclic diphosphate + reduced [flavodoxin]. The protein operates within isoprenoid biosynthesis; isopentenyl diphosphate biosynthesis via DXP pathway; isopentenyl diphosphate from 1-deoxy-D-xylulose 5-phosphate: step 5/6. Converts 2C-methyl-D-erythritol 2,4-cyclodiphosphate (ME-2,4cPP) into 1-hydroxy-2-methyl-2-(E)-butenyl 4-diphosphate. In Xanthomonas euvesicatoria pv. vesicatoria (strain 85-10) (Xanthomonas campestris pv. vesicatoria), this protein is 4-hydroxy-3-methylbut-2-en-1-yl diphosphate synthase (flavodoxin).